The primary structure comprises 333 residues: Biotin synthase (333 aa).

Positions 54–283 constitute a Radical SAM core domain; sequence FCSNTFDMCS…RAFIRLAGGR (230 aa). The [4Fe-4S] cluster site is built by Cys-72, Cys-76, and Cys-79. The [2Fe-2S] cluster site is built by Ser-116, Cys-148, Cys-208, and Arg-278.

Belongs to the radical SAM superfamily. Biotin synthase family. Homodimer. The cofactor is [4Fe-4S] cluster. Requires [2Fe-2S] cluster as cofactor.

The enzyme catalyses (4R,5S)-dethiobiotin + (sulfur carrier)-SH + 2 reduced [2Fe-2S]-[ferredoxin] + 2 S-adenosyl-L-methionine = (sulfur carrier)-H + biotin + 2 5'-deoxyadenosine + 2 L-methionine + 2 oxidized [2Fe-2S]-[ferredoxin]. It functions in the pathway cofactor biosynthesis; biotin biosynthesis; biotin from 7,8-diaminononanoate: step 2/2. Catalyzes the conversion of dethiobiotin (DTB) to biotin by the insertion of a sulfur atom into dethiobiotin via a radical-based mechanism. The sequence is that of Biotin synthase from Brachyspira hyodysenteriae (strain ATCC 49526 / WA1).